Reading from the N-terminus, the 509-residue chain is Kelch repeat protein M-T9 (509 aa).

One can recognise a BTB domain in the interval 15 to 79 (SDVTVVAGDS…MYAGCDGLND (65 aa)). 5 Kelch repeats span residues 274 to 320 (VLYC…IVNG), 321 to 368 (YIYV…YRNE), 370 to 415 (WIVG…VYNN), 416 to 463 (RLYC…VYNK), and 465 to 509 (IYVL…NDEI).

Belongs to the poxviruses Kelch family.

The polypeptide is Kelch repeat protein M-T9 (Myxoma virus (strain Lausanne) (MYXV)).